Reading from the N-terminus, the 775-residue chain is Serine/threonine-protein kinase-like protein CCR1 (775 aa).

A signal peptide spans 1–23 (METRCSLLFLSLILLYLPKPGSG). Over 24-439 (FGSSGPIAAS…DKHWHQLQRL (416 aa)) the chain is Extracellular. N-linked (GlcNAc...) asparagine glycosylation is found at asparagine 57, asparagine 102, asparagine 167, asparagine 213, asparagine 220, asparagine 241, asparagine 261, asparagine 292, asparagine 328, and asparagine 360. A TNFR-Cys repeat occupies 351–406 (PCNEKEFAFNASILNEPDLTSLCVRKELMVCSPCGSDCSHGFFLSSSCTANSDRIC). 3 cysteine pairs are disulfide-bonded: cysteine 352-cysteine 381, cysteine 384-cysteine 398, and cysteine 388-cysteine 406. A glycan (N-linked (GlcNAc...) asparagine) is linked at asparagine 414. Residues 440–460 (VLIIGSCASALLIIIIGCCVV) traverse the membrane as a helical segment. The Cytoplasmic segment spans residues 461–775 (PRIVTSPNKE…EHVARDALIF (315 aa)). A Protein kinase domain is found at 520 to 770 (FKEFNELGRG…LANWLEHVAR (251 aa)). ATP contacts are provided by residues 526 to 534 (LGRGSYGFV) and lysine 548. Catalysis depends on aspartate 645, which acts as the Proton acceptor.

The protein belongs to the protein kinase superfamily. Ser/Thr protein kinase family. Homodimer. As to expression, expressed in roots, leaves, shoot apical meristems (SAM), and floral buds.

It localises to the membrane. It carries out the reaction L-seryl-[protein] + ATP = O-phospho-L-seryl-[protein] + ADP + H(+). The catalysed reaction is L-threonyl-[protein] + ATP = O-phospho-L-threonyl-[protein] + ADP + H(+). In terms of biological role, serine/threonine-protein kinase with low activity. The polypeptide is Serine/threonine-protein kinase-like protein CCR1 (CCR1) (Arabidopsis thaliana (Mouse-ear cress)).